The primary structure comprises 353 residues: UDP-N-acetylglucosamine--N-acetylmuramyl-(pentapeptide) pyrophosphoryl-undecaprenol N-acetylglucosamine transferase (353 aa).

UDP-N-acetyl-alpha-D-glucosamine-binding positions include 11-13, arginine 164, serine 194, and glutamine 289; that span reads SAG.

The protein belongs to the glycosyltransferase 28 family. MurG subfamily.

It localises to the cell membrane. It catalyses the reaction di-trans,octa-cis-undecaprenyl diphospho-N-acetyl-alpha-D-muramoyl-L-alanyl-D-glutamyl-meso-2,6-diaminopimeloyl-D-alanyl-D-alanine + UDP-N-acetyl-alpha-D-glucosamine = di-trans,octa-cis-undecaprenyl diphospho-[N-acetyl-alpha-D-glucosaminyl-(1-&gt;4)]-N-acetyl-alpha-D-muramoyl-L-alanyl-D-glutamyl-meso-2,6-diaminopimeloyl-D-alanyl-D-alanine + UDP + H(+). The protein operates within cell wall biogenesis; peptidoglycan biosynthesis. Functionally, cell wall formation. Catalyzes the transfer of a GlcNAc subunit on undecaprenyl-pyrophosphoryl-MurNAc-pentapeptide (lipid intermediate I) to form undecaprenyl-pyrophosphoryl-MurNAc-(pentapeptide)GlcNAc (lipid intermediate II). The protein is UDP-N-acetylglucosamine--N-acetylmuramyl-(pentapeptide) pyrophosphoryl-undecaprenol N-acetylglucosamine transferase of Clostridium kluyveri (strain ATCC 8527 / DSM 555 / NBRC 12016 / NCIMB 10680 / K1).